A 696-amino-acid polypeptide reads, in one-letter code: Phosphate acetyltransferase (696 aa).

Residues 367 to 696 (FEHKLLEQAR…QSPHEKATAQ (330 aa)) are phosphate acetyltransferase.

This sequence in the N-terminal section; belongs to the CobB/CobQ family. It in the C-terminal section; belongs to the phosphate acetyltransferase and butyryltransferase family.

Its subcellular location is the cytoplasm. It catalyses the reaction acetyl-CoA + phosphate = acetyl phosphate + CoA. The protein operates within metabolic intermediate biosynthesis; acetyl-CoA biosynthesis; acetyl-CoA from acetate: step 2/2. In terms of biological role, involved in acetate metabolism. This Streptomyces avermitilis (strain ATCC 31267 / DSM 46492 / JCM 5070 / NBRC 14893 / NCIMB 12804 / NRRL 8165 / MA-4680) protein is Phosphate acetyltransferase (pta).